Here is a 118-residue protein sequence, read N- to C-terminus: Small ribosomal subunit protein uS13 (118 aa).

Residues 94–118 (GLPVRGQRTRTNARTRKGPRKAIKK) form a disordered region.

It belongs to the universal ribosomal protein uS13 family. Part of the 30S ribosomal subunit. Forms a loose heterodimer with protein S19. Forms two bridges to the 50S subunit in the 70S ribosome.

Its function is as follows. Located at the top of the head of the 30S subunit, it contacts several helices of the 16S rRNA. In the 70S ribosome it contacts the 23S rRNA (bridge B1a) and protein L5 of the 50S subunit (bridge B1b), connecting the 2 subunits; these bridges are implicated in subunit movement. Contacts the tRNAs in the A and P-sites. In Thiobacillus denitrificans (strain ATCC 25259 / T1), this protein is Small ribosomal subunit protein uS13.